The primary structure comprises 357 residues: MDAPRINKWLKPLSALYGVGVRLRNYLFDKNVLISNSFDIPIVCVGNITIGGTGKTPHVEYLIRLLHPRYRIAVVSRGYKRKTKGMIVATEGSTAWDIGDEPRQIKRKYPDLTVIVDADRSRAIGYLCDLAEEQRPQLIVLDDGFQHRKVKADLNIVLTDYNRILTKDYLLPAGRLREPAGSIQRADMVILTKCPDDLAPIDLRAAKRDLALYPHQKLFFSKFMYGQGLKPLFSDQSPSAEVRSALAIAGIASPKLFFREIRTRFPSGTDRIYPDHHEFTDREVCLLIQDWHELHRKDANAIVVCTEKDAMRLALRQSSFPQEMQERFYYLPVEVKLMFDQEKVFVDRLLGVIQHKK.

Position 49 to 56 (49 to 56 (TIGGTGKT)) interacts with ATP.

The protein belongs to the LpxK family.

The catalysed reaction is a lipid A disaccharide + ATP = a lipid IVA + ADP + H(+). Its pathway is glycolipid biosynthesis; lipid IV(A) biosynthesis; lipid IV(A) from (3R)-3-hydroxytetradecanoyl-[acyl-carrier-protein] and UDP-N-acetyl-alpha-D-glucosamine: step 6/6. Its function is as follows. Transfers the gamma-phosphate of ATP to the 4'-position of a tetraacyldisaccharide 1-phosphate intermediate (termed DS-1-P) to form tetraacyldisaccharide 1,4'-bis-phosphate (lipid IVA). The chain is Tetraacyldisaccharide 4'-kinase from Porphyromonas gingivalis (strain ATCC 33277 / DSM 20709 / CIP 103683 / JCM 12257 / NCTC 11834 / 2561).